A 235-amino-acid polypeptide reads, in one-letter code: Large ribosomal subunit protein uL1 (235 aa).

It belongs to the universal ribosomal protein uL1 family. In terms of assembly, part of the 50S ribosomal subunit.

In terms of biological role, binds directly to 23S rRNA. The L1 stalk is quite mobile in the ribosome, and is involved in E site tRNA release. Protein L1 is also a translational repressor protein, it controls the translation of the L11 operon by binding to its mRNA. The sequence is that of Large ribosomal subunit protein uL1 from Mycobacterium leprae (strain Br4923).